The primary structure comprises 239 residues: uncharacterized protein (239 aa).

The next 3 membrane-spanning stretches (helical) occupy residues 125 to 144 (LAII…LILY), 149 to 171 (IFVL…FLFL), and 197 to 216 (SVLN…GILF).

Its subcellular location is the cell membrane. This is an uncharacterized protein from Aquifex aeolicus (strain VF5).